Reading from the N-terminus, the 602-residue chain is Elongation factor 4 (602 aa).

The tr-type G domain maps to 7-188 (ENIRNFSIIA…AIVELIPPPK (182 aa)). GTP contacts are provided by residues 19-24 (DHGKST) and 135-138 (NKID).

The protein belongs to the TRAFAC class translation factor GTPase superfamily. Classic translation factor GTPase family. LepA subfamily.

The protein localises to the cell inner membrane. It catalyses the reaction GTP + H2O = GDP + phosphate + H(+). Its function is as follows. Required for accurate and efficient protein synthesis under certain stress conditions. May act as a fidelity factor of the translation reaction, by catalyzing a one-codon backward translocation of tRNAs on improperly translocated ribosomes. Back-translocation proceeds from a post-translocation (POST) complex to a pre-translocation (PRE) complex, thus giving elongation factor G a second chance to translocate the tRNAs correctly. Binds to ribosomes in a GTP-dependent manner. The polypeptide is Elongation factor 4 (Chlamydia abortus (strain DSM 27085 / S26/3) (Chlamydophila abortus)).